A 209-amino-acid chain; its full sequence is B3 domain-containing protein At2g31420 (209 aa).

Residues 101–198 (LSKLEKSDFL…KLCFALSSPT (98 aa)) constitute a DNA-binding region (TF-B3).

Its subcellular location is the nucleus. The chain is B3 domain-containing protein At2g31420 from Arabidopsis thaliana (Mouse-ear cress).